We begin with the raw amino-acid sequence, 514 residues long: Probable endopolygalacturonase D (514 aa).

An N-terminal signal peptide occupies residues 1–16 (MKRCALLTPLLPLALA). Residues 134–166 (IKSSSPGPSSSFAAAATTEAPTSTRASPYTPYT) are disordered. Positions 136 to 166 (SSSPGPSSSFAAAATTEAPTSTRASPYTPYT) are enriched in low complexity. Cysteines 173 and 188 form a disulfide. The N-linked (GlcNAc...) asparagine glycan is linked to asparagine 240. PbH1 repeat units lie at residues 280-302 (VYNS…DIEN), 303-341 (TESL…DIKS), 342-363 (STDL…AITS), 364-384 (GTNI…SIGS), 393-414 (VDGV…RIKT), 422-444 (VSNI…VVQQ), and 456-500 (SNGV…SITG). The tract at residues 312–335 (TLDNSAGDEPNDSSDGDPAAHNSD) is disordered. N-linked (GlcNAc...) asparagine glycosylation occurs at asparagine 322. Aspartate 356 (proton donor) is an active-site residue. Cysteine 358 and cysteine 374 are oxidised to a cystine. A glycan (N-linked (GlcNAc...) asparagine) is linked at asparagine 366. Residue histidine 378 is part of the active site. Asparagine 429 carries an N-linked (GlcNAc...) asparagine glycan. A disulfide bridge links cysteine 483 with cysteine 488. A glycan (N-linked (GlcNAc...) asparagine) is linked at asparagine 490. Cysteines 506 and 513 form a disulfide.

The protein belongs to the glycosyl hydrolase 28 family.

The protein localises to the secreted. It catalyses the reaction (1,4-alpha-D-galacturonosyl)n+m + H2O = (1,4-alpha-D-galacturonosyl)n + (1,4-alpha-D-galacturonosyl)m.. Functionally, involved in maceration and soft-rotting of plant tissue. Hydrolyzes the 1,4-alpha glycosidic bonds of de-esterified pectate in the smooth region of the plant cell wall. This Emericella nidulans (strain FGSC A4 / ATCC 38163 / CBS 112.46 / NRRL 194 / M139) (Aspergillus nidulans) protein is Probable endopolygalacturonase D (pgaD).